We begin with the raw amino-acid sequence, 602 residues long: Aspartate--tRNA(Asp/Asn) ligase (602 aa).

Glu187 serves as a coordination point for L-aspartate. Residues 211–214 form an aspartate region; sequence QQFK. L-aspartate is bound by residues Arg233 and His461. Residue 233–235 participates in ATP binding; sequence RDE. Glu495 serves as a coordination point for ATP. Arg502 is a binding site for L-aspartate. Residue 547-550 coordinates ATP; it reads GLDR.

This sequence belongs to the class-II aminoacyl-tRNA synthetase family. Type 1 subfamily. In terms of assembly, homodimer.

Its subcellular location is the cytoplasm. It carries out the reaction tRNA(Asx) + L-aspartate + ATP = L-aspartyl-tRNA(Asx) + AMP + diphosphate. In terms of biological role, aspartyl-tRNA synthetase with relaxed tRNA specificity since it is able to aspartylate not only its cognate tRNA(Asp) but also tRNA(Asn). Reaction proceeds in two steps: L-aspartate is first activated by ATP to form Asp-AMP and then transferred to the acceptor end of tRNA(Asp/Asn). This is Aspartate--tRNA(Asp/Asn) ligase from Chlorobium phaeovibrioides (strain DSM 265 / 1930) (Prosthecochloris vibrioformis (strain DSM 265)).